The following is a 196-amino-acid chain: Sulfur-rich protein (196 aa).

Helical transmembrane passes span 34-54 (VTAG…LIGW), 76-96 (ITLL…MFIF), and 105-125 (FWLI…SLCF).

It is found in the membrane. The chain is Sulfur-rich protein (srp) from Chlamydia pneumoniae (Chlamydophila pneumoniae).